Reading from the N-terminus, the 82-residue chain is MANHKSALKRIRSNETKRLRNRYQHKTTRNAIKKLRDADKKEAEGMLPSVISMVDKLAKKNIIHDNKAANLKSQLTKHVAAL.

The span at 1-11 (MANHKSALKRI) shows a compositional bias: basic residues. Residues 1–20 (MANHKSALKRIRSNETKRLR) are disordered.

Belongs to the bacterial ribosomal protein bS20 family.

Binds directly to 16S ribosomal RNA. In Christiangramia forsetii (strain DSM 17595 / CGMCC 1.15422 / KT0803) (Gramella forsetii), this protein is Small ribosomal subunit protein bS20.